We begin with the raw amino-acid sequence, 435 residues long: Putrescine transporter PotE (435 aa).

Transmembrane regions (helical) follow at residues 8 to 28, 39 to 59, 95 to 115, 117 to 137, 148 to 168, 185 to 205, 224 to 244, 275 to 295, 320 to 340, 354 to 374, 386 to 406, and 409 to 429; these read IGVV…GIIM, ISIV…YAFA, LVIA…ELFG, ILSP…ATVL, ISSF…IIGW, VPTF…FLGL, IAVL…TNVI, VIMG…QFTI, APVV…LMTI, LAVV…AVLL, TTVF…YAAG, and AMLY…FVSY.

Belongs to the amino acid-polyamine-organocation (APC) superfamily. Basic amino acid/polyamine antiporter (APA) (TC 2.A.3.2) family.

It localises to the cell inner membrane. It catalyses the reaction putrescine(in) + H(+)(in) = putrescine(out) + H(+)(out). It carries out the reaction putrescine(in) + L-ornithine(out) = putrescine(out) + L-ornithine(in). Catalyzes both the uptake and excretion of putrescine. The uptake of putrescine is dependent on the membrane potential and the excretion involves putrescine-ornithine antiporter activity. In Haemophilus influenzae (strain ATCC 51907 / DSM 11121 / KW20 / Rd), this protein is Putrescine transporter PotE.